The sequence spans 208 residues: Phosphoribosyl-dephospho-CoA transferase (208 aa).

Residues Asp133 and Asp135 contribute to the active site.

The protein belongs to the MdcG family.

The catalysed reaction is apo-[malonate decarboxylase ACP] + 2'-(5''-triphospho-alpha-D-ribosyl)-3'-dephospho-CoA = holo-[malonate decarboxylase ACP] + diphosphate. Functionally, transfers 2'-(5-triphosphoribosyl)-3'-dephosphocoenzyme-A to the apo-[acyl-carrier-protein] of the malonate decarboxylase to yield holo-[acyl-carrier-protein]. This chain is Phosphoribosyl-dephospho-CoA transferase, found in Pseudomonas fluorescens (strain ATCC BAA-477 / NRRL B-23932 / Pf-5).